The sequence spans 337 residues: Anthranilate phosphoribosyltransferase (337 aa).

5-phospho-alpha-D-ribose 1-diphosphate is bound by residues Gly-82, 85–86, Thr-90, 92–95, 110–118, and Thr-122; these read GD, NIST, and KHGNRAMSS. Gly-82 contacts anthranilate. Ser-94 provides a ligand contact to Mg(2+). Asn-113 is an anthranilate binding site. Anthranilate is bound at residue Arg-168. Mg(2+) is bound by residues Asp-226 and Glu-227.

The protein belongs to the anthranilate phosphoribosyltransferase family. Homodimer. It depends on Mg(2+) as a cofactor.

The catalysed reaction is N-(5-phospho-beta-D-ribosyl)anthranilate + diphosphate = 5-phospho-alpha-D-ribose 1-diphosphate + anthranilate. Its pathway is amino-acid biosynthesis; L-tryptophan biosynthesis; L-tryptophan from chorismate: step 2/5. In terms of biological role, catalyzes the transfer of the phosphoribosyl group of 5-phosphorylribose-1-pyrophosphate (PRPP) to anthranilate to yield N-(5'-phosphoribosyl)-anthranilate (PRA). This Phenylobacterium zucineum (strain HLK1) protein is Anthranilate phosphoribosyltransferase.